A 510-amino-acid chain; its full sequence is Bifunctional purine biosynthesis protein PurH (510 aa).

Residues M1 to T142 form the MGS-like domain.

The protein belongs to the PurH family.

The enzyme catalyses (6R)-10-formyltetrahydrofolate + 5-amino-1-(5-phospho-beta-D-ribosyl)imidazole-4-carboxamide = 5-formamido-1-(5-phospho-D-ribosyl)imidazole-4-carboxamide + (6S)-5,6,7,8-tetrahydrofolate. The catalysed reaction is IMP + H2O = 5-formamido-1-(5-phospho-D-ribosyl)imidazole-4-carboxamide. It participates in purine metabolism; IMP biosynthesis via de novo pathway; 5-formamido-1-(5-phospho-D-ribosyl)imidazole-4-carboxamide from 5-amino-1-(5-phospho-D-ribosyl)imidazole-4-carboxamide (10-formyl THF route): step 1/1. The protein operates within purine metabolism; IMP biosynthesis via de novo pathway; IMP from 5-formamido-1-(5-phospho-D-ribosyl)imidazole-4-carboxamide: step 1/1. The chain is Bifunctional purine biosynthesis protein PurH from Campylobacter concisus (strain 13826).